Consider the following 218-residue polypeptide: 1-Cys peroxiredoxin (218 aa).

The Thioredoxin domain occupies 4–164 (LTIGDTIPDL…VLRVVESLQK (161 aa)). C46 (cysteine sulfenic acid (-SOH) intermediate) is an active-site residue. The short motif at 194–217 (KEMFPQGFKTADLPSKKEYLRFTN) is the Bipartite nuclear localization signal element.

Belongs to the peroxiredoxin family. Prx6 subfamily.

It localises to the nucleus. The protein localises to the cytoplasm. It catalyses the reaction a hydroperoxide + [thioredoxin]-dithiol = an alcohol + [thioredoxin]-disulfide + H2O. In terms of biological role, thiol-specific peroxidase that catalyzes the reduction of hydrogen peroxide and organic hydroperoxides to water and alcohols, respectively. Seems to contribute to the inhibition of germination during stress. The chain is 1-Cys peroxiredoxin from Medicago truncatula (Barrel medic).